A 94-amino-acid polypeptide reads, in one-letter code: uncharacterized protein (94 aa).

The interval 1–22 is disordered; sequence MATLQQAQQQNNQLTQQNNQLT. Positions 1–77 form a coiled coil; it reads MATLQQAQQQ…NRLHSENHRL (77 aa).

This is an uncharacterized protein from Acheta domesticus (House cricket).